The following is a 465-amino-acid chain: Mitochondrial F-box protein MFB1 (465 aa).

The F-box domain maps to 14-60 (ERSLTNLPLNLLFRILSHLDMNDLQNIGKTCTLLRMLANENIVYRNA). Residues 253-279 (FTKSRDPDYKEMTPTSTESSDSITRLR) form a disordered region. Positions 254 to 263 (TKSRDPDYKE) are enriched in basic and acidic residues. A compositionally biased stretch (polar residues) spans 265–275 (TPTSTESSDSI).

It localises to the mitochondrion. The polypeptide is Mitochondrial F-box protein MFB1 (MFB1) (Saccharomyces cerevisiae (strain ATCC 204508 / S288c) (Baker's yeast)).